The following is a 533-amino-acid chain: UDP-glucuronosyltransferase 1-2 (533 aa).

The signal sequence occupies residues 1 to 27 (MDTGLCVPLRGISGLLLLLCALPWAEG). N-linked (GlcNAc...) asparagine glycosylation is found at N141, N295, and N433. A helical transmembrane segment spans residues 491 to 511 (VIGFLLAIVLTVVFIVFKCCA).

Belongs to the UDP-glycosyltransferase family. Expressed in kidney.

It is found in the microsome. It localises to the endoplasmic reticulum membrane. It catalyses the reaction glucuronate acceptor + UDP-alpha-D-glucuronate = acceptor beta-D-glucuronoside + UDP + H(+). UDPGT is of major importance in the conjugation and subsequent elimination of potentially toxic xenobiotics and endogenous compounds. This is UDP-glucuronosyltransferase 1-2 (Ugt1a2) from Mus musculus (Mouse).